The chain runs to 318 residues: NADH-ubiquinone oxidoreductase chain 1 (318 aa).

8 consecutive transmembrane segments (helical) span residues 2 to 22, 76 to 96, 100 to 120, 146 to 166, 171 to 191, 222 to 242, 253 to 273, and 294 to 314; these read PMINLLLLIMSILIAMAFLML, ALALTIALLLWTPLPMPIPLI, LGLLFILAASSLTVYSILWSG, LALILLSVLLMSGSFNLSALI, HSWLLLPSWPLALMWFISTLA, LFFMAEYTNIILMNALTTMIF, ELYTTLFTIKTLLLTSLFLWI, and LPLTLALLMWHISVPIATSGI.

The protein belongs to the complex I subunit 1 family. In terms of assembly, core subunit of respiratory chain NADH dehydrogenase (Complex I) which is composed of 45 different subunits.

It localises to the mitochondrion inner membrane. It carries out the reaction a ubiquinone + NADH + 5 H(+)(in) = a ubiquinol + NAD(+) + 4 H(+)(out). Its function is as follows. Core subunit of the mitochondrial membrane respiratory chain NADH dehydrogenase (Complex I) which catalyzes electron transfer from NADH through the respiratory chain, using ubiquinone as an electron acceptor. Essential for the catalytic activity and assembly of complex I. The sequence is that of NADH-ubiquinone oxidoreductase chain 1 (MT-ND1) from Pongo abelii (Sumatran orangutan).